A 496-amino-acid polypeptide reads, in one-letter code: Glycerol kinase (496 aa).

T12 contributes to the ADP binding site. 3 residues coordinate ATP: T12, T13, and S14. T12 provides a ligand contact to sn-glycerol 3-phosphate. ADP is bound at residue R16. Sn-glycerol 3-phosphate contacts are provided by R82, E83, and Y134. Residues R82, E83, and Y134 each contribute to the glycerol site. At H230 the chain carries Phosphohistidine; by HPr. D244 provides a ligand contact to sn-glycerol 3-phosphate. Residues D244 and Q245 each coordinate glycerol. Positions 266 and 309 each coordinate ADP. ATP-binding residues include T266, G309, Q313, and G410. Positions 410 and 414 each coordinate ADP.

The protein belongs to the FGGY kinase family. Homotetramer and homodimer (in equilibrium). Post-translationally, the phosphoenolpyruvate-dependent sugar phosphotransferase system (PTS), including enzyme I, and histidine-containing protein (HPr) are required for the phosphorylation, which leads to the activation of the enzyme.

It catalyses the reaction glycerol + ATP = sn-glycerol 3-phosphate + ADP + H(+). It participates in polyol metabolism; glycerol degradation via glycerol kinase pathway; sn-glycerol 3-phosphate from glycerol: step 1/1. Activated by phosphorylation and inhibited by fructose 1,6-bisphosphate (FBP). Key enzyme in the regulation of glycerol uptake and metabolism. Catalyzes the phosphorylation of glycerol to yield sn-glycerol 3-phosphate. This is Glycerol kinase from Bacillus cereus (strain ATCC 14579 / DSM 31 / CCUG 7414 / JCM 2152 / NBRC 15305 / NCIMB 9373 / NCTC 2599 / NRRL B-3711).